A 374-amino-acid chain; its full sequence is UDP-N-acetylglucosamine--N-acetylmuramyl-(pentapeptide) pyrophosphoryl-undecaprenol N-acetylglucosamine transferase (374 aa).

Residues 13 to 15 (TGG), N124, R165, S193, and Q294 each bind UDP-N-acetyl-alpha-D-glucosamine.

Belongs to the glycosyltransferase 28 family. MurG subfamily.

Its subcellular location is the cell inner membrane. The enzyme catalyses di-trans,octa-cis-undecaprenyl diphospho-N-acetyl-alpha-D-muramoyl-L-alanyl-D-glutamyl-meso-2,6-diaminopimeloyl-D-alanyl-D-alanine + UDP-N-acetyl-alpha-D-glucosamine = di-trans,octa-cis-undecaprenyl diphospho-[N-acetyl-alpha-D-glucosaminyl-(1-&gt;4)]-N-acetyl-alpha-D-muramoyl-L-alanyl-D-glutamyl-meso-2,6-diaminopimeloyl-D-alanyl-D-alanine + UDP + H(+). It functions in the pathway cell wall biogenesis; peptidoglycan biosynthesis. In terms of biological role, cell wall formation. Catalyzes the transfer of a GlcNAc subunit on undecaprenyl-pyrophosphoryl-MurNAc-pentapeptide (lipid intermediate I) to form undecaprenyl-pyrophosphoryl-MurNAc-(pentapeptide)GlcNAc (lipid intermediate II). In Rhizobium meliloti (strain 1021) (Ensifer meliloti), this protein is UDP-N-acetylglucosamine--N-acetylmuramyl-(pentapeptide) pyrophosphoryl-undecaprenol N-acetylglucosamine transferase.